The following is an 88-amino-acid chain: Adenylosuccinate lyase (88 aa).

Residues 4–5 (RY) and 67–69 (KHD) each bind N(6)-(1,2-dicarboxyethyl)-AMP.

This sequence belongs to the lyase 1 family. Adenylosuccinate lyase subfamily. In terms of assembly, homotetramer and homodimer. Residues from neighboring subunits contribute catalytic and substrate-binding residues to each active site.

It catalyses the reaction N(6)-(1,2-dicarboxyethyl)-AMP = fumarate + AMP. The catalysed reaction is (2S)-2-[5-amino-1-(5-phospho-beta-D-ribosyl)imidazole-4-carboxamido]succinate = 5-amino-1-(5-phospho-beta-D-ribosyl)imidazole-4-carboxamide + fumarate. It participates in purine metabolism; AMP biosynthesis via de novo pathway; AMP from IMP: step 2/2. The protein operates within purine metabolism; IMP biosynthesis via de novo pathway; 5-amino-1-(5-phospho-D-ribosyl)imidazole-4-carboxamide from 5-amino-1-(5-phospho-D-ribosyl)imidazole-4-carboxylate: step 2/2. In terms of biological role, catalyzes two reactions in de novo purine nucleotide biosynthesis. Catalyzes the breakdown of 5-aminoimidazole- (N-succinylocarboxamide) ribotide (SAICAR or 2-[5-amino-1-(5-phospho-beta-D-ribosyl)imidazole-4-carboxamido]succinate) to 5-aminoimidazole-4-carboxamide ribotide (AICAR or 5-amino-1-(5-phospho-beta-D-ribosyl)imidazole-4-carboxamide) and fumarate, and of adenylosuccinate (ADS or N(6)-(1,2-dicarboxyethyl)-AMP) to adenosine monophosphate (AMP) and fumarate. The chain is Adenylosuccinate lyase (purB) from Spiroplasma citri.